We begin with the raw amino-acid sequence, 309 residues long: L-aminoadipate-semialdehyde dehydrogenase-phosphopantetheinyl transferase (309 aa).

Residues R47, 86–91 (RTAKGK), and 108–111 (NISH) contribute to the CoA site. 2 residues coordinate Mg(2+): D129 and E181. 181–185 (ESFIK) is a binding site for CoA. Position 258 is a phosphoserine (S258).

It belongs to the P-Pant transferase superfamily. AcpS family. In terms of assembly, monomer. It depends on Mg(2+) as a cofactor. Detected in heart, skeletal muscle, placenta, testis, brain, pancreas, liver and kidney.

The protein resides in the cytoplasm. Its subcellular location is the cytosol. It carries out the reaction apo-[ACP] + CoA = holo-[ACP] + adenosine 3',5'-bisphosphate + H(+). The enzyme catalyses apo-[ACP] + acetyl-CoA = acetyl-[ACP] + adenosine 3',5'-bisphosphate + H(+). Its function is as follows. Catalyzes the post-translational modification of target proteins by phosphopantetheine. Can transfer the 4'-phosphopantetheine moiety from coenzyme A, regardless of whether the CoA is presented in the free thiol form or as an acetyl thioester, to a serine residue of a broad range of acceptors including the acyl carrier domain of FASN. The chain is L-aminoadipate-semialdehyde dehydrogenase-phosphopantetheinyl transferase (AASDHPPT) from Homo sapiens (Human).